The primary structure comprises 586 residues: Arrestin-related trafficking adapter 5 (586 aa).

Disordered regions lie at residues 123–145 (GENA…DMDT) and 182–217 (ENGV…YSNR). Residues 126 to 145 (AENQHNSSSGRSTSNQDMDT) are compositionally biased toward polar residues. The span at 199 to 216 (SRSSSSNTLNNNSHSYSN) shows a compositional bias: low complexity. K364 is covalently cross-linked (Glycyl lysine isopeptide (Lys-Gly) (interchain with G-Cter in ubiquitin)).

This sequence belongs to the arrestin family. Interacts with RSP5. Ubiquitinated by RSP5.

Functionally, may regulate endocytosis by recruiting RSP5 ubiquitin ligase activity to specific plasma membrane proteins in response to extracellular stimuli. This Saccharomyces cerevisiae (strain ATCC 204508 / S288c) (Baker's yeast) protein is Arrestin-related trafficking adapter 5 (ART5).